Reading from the N-terminus, the 184-residue chain is ATP synthase subunit b, chloroplastic (184 aa).

Residues 27–49 (LATNPINLSVVLGVLIFFGKGVL) form a helical membrane-spanning segment.

This sequence belongs to the ATPase B chain family. As to quaternary structure, F-type ATPases have 2 components, F(1) - the catalytic core - and F(0) - the membrane proton channel. F(1) has five subunits: alpha(3), beta(3), gamma(1), delta(1), epsilon(1). F(0) has four main subunits: a(1), b(1), b'(1) and c(10-14). The alpha and beta chains form an alternating ring which encloses part of the gamma chain. F(1) is attached to F(0) by a central stalk formed by the gamma and epsilon chains, while a peripheral stalk is formed by the delta, b and b' chains.

The protein resides in the plastid. Its subcellular location is the chloroplast thylakoid membrane. F(1)F(0) ATP synthase produces ATP from ADP in the presence of a proton or sodium gradient. F-type ATPases consist of two structural domains, F(1) containing the extramembraneous catalytic core and F(0) containing the membrane proton channel, linked together by a central stalk and a peripheral stalk. During catalysis, ATP synthesis in the catalytic domain of F(1) is coupled via a rotary mechanism of the central stalk subunits to proton translocation. In terms of biological role, component of the F(0) channel, it forms part of the peripheral stalk, linking F(1) to F(0). The polypeptide is ATP synthase subunit b, chloroplastic (Carica papaya (Papaya)).